A 163-amino-acid polypeptide reads, in one-letter code: Nucleotide-binding protein HSM_1099 (163 aa).

This sequence belongs to the YajQ family.

Nucleotide-binding protein. In Histophilus somni (strain 2336) (Haemophilus somnus), this protein is Nucleotide-binding protein HSM_1099.